A 221-amino-acid chain; its full sequence is Ras-related protein Rab-28 (221 aa).

Position 2 is an N-acetylserine (serine 2). At serine 8 the chain carries Phosphoserine. Residues glycine 21, glycine 24, lysine 25, threonine 26, serine 27, glycine 38, lysine 39, tyrosine 41, and threonine 44 each coordinate GTP. Threonine 26 is a Mg(2+) binding site. The tract at residues 35 to 49 (ETFGKQYKQTIGLDF) is switch I. Threonine 44 and aspartate 68 together coordinate Mg(2+). The tract at residues 68-85 (DIGGQTIGGKMLDKYIYG) is switch II. 6 residues coordinate GTP: glycine 71, asparagine 129, lysine 130, aspartate 132, alanine 160, and lysine 161. A Cysteine methyl ester modification is found at cysteine 218. The S-farnesyl cysteine moiety is linked to residue cysteine 218. The propeptide at 219–221 (AVQ) is removed in mature form.

It belongs to the small GTPase superfamily. Rab family. As to quaternary structure, interacts (prenylated form) with PDE6D; the interaction promotes RAB28 delivery to the photoreceptor outer segments. Interacts with KCNJ13; the interaction may facilitate cone outer segments phagocytosis. Interacts with RELA; the interaction contributes to RELA transport from cytoplasm to nucleus. The cofactor is Mg(2+). In terms of processing, isoprenylated. In terms of tissue distribution, testis, brain, and to much lower levels heart, skeletal muscle and fat cells. Expressed in the retina.

The protein resides in the cell membrane. It localises to the cytoplasm. It is found in the cytoskeleton. The protein localises to the cilium basal body. Its subcellular location is the nucleus. It carries out the reaction GTP + H2O = GDP + phosphate + H(+). Regulated by guanine nucleotide exchange factors (GEFs) which promote the exchange of bound GDP for free GTP. Regulated by GTPase activating proteins (GAPs) which increase the GTP hydrolysis activity. Inhibited by GDP dissociation inhibitors (GDIs). Its function is as follows. The small GTPases Rab are key regulators of intracellular membrane trafficking, from the formation of transport vesicles to their fusion with membranes. Rabs cycle between an inactive GDP-bound form and an active GTP-bound form that is able to recruit to membranes different sets of downstream effectors directly responsible for vesicle formation, movement, tethering and fusion. RAB28 is required for shedding and phagocytosis of cone cell outer segments (OS) discs in the retina. Also participates in nuclear factor kappa-B p65/RELA nuclear transport in endothelial cells. This chain is Ras-related protein Rab-28, found in Rattus norvegicus (Rat).